The chain runs to 174 residues: Neuromedin-U (174 aa).

A signal peptide spans 1–34 (MLRTESCRPRSPAGQVAAASPLLLLLLLLAWCAG). Positions 35 to 103 (ACRGAPILPQ…EQDEKDNTKR (69 aa)) are excised as a propeptide. Methionine sulfoxide; partial is present on Met-139. Asn-166 carries the post-translational modification Asparagine amide. Positions 170 to 174 (SAGFI) are excised as a propeptide.

The protein belongs to the NmU family. In terms of tissue distribution, expressed throughout the enteric nervous system with highest levels being found in the jejunum.

The protein localises to the secreted. Functionally, ligand for receptors NMUR1 and NMUR2. Stimulates muscle contractions of specific regions of the gastrointestinal tract. In humans, NmU stimulates contractions of the ileum and urinary bladder. Its function is as follows. Does not function as a ligand for either NMUR1 or NMUR2. Indirectly induces prolactin release although its potency is much lower than that of neuromedin precursor-related peptide 36. In terms of biological role, does not function as a ligand for either NMUR1 or NMUR2. Indirectly induces prolactin release from lactotroph cells in the pituitary gland, probably via the hypothalamic dopaminergic system. This is Neuromedin-U (NMU) from Homo sapiens (Human).